The following is a 316-amino-acid chain: Apolipoprotein E (316 aa).

The N-terminal stretch at 1–18 (MKVLWVALVITLLAGCQA) is a signal peptide. Tandem repeats lie at residues 79–100 (VLMDETMKEVKAYREELEGQLA), 101–122 (PIAQETQARVSKELQAAQARLA), 123–144 (SDMEDVRSRLAQYRSEVQAMMG), 145–166 (QTTDELRGRLASHLRKLRKRLL), 167–188 (RDAEDLQKRLAVYRAGALEGSE), 189–210 (RSVSAIRERLGPLVEQGRARAA), 211–232 (TVGTLASQTLRERAEAWHQKLR), and 233–254 (GRVEEMGTQARDHLEEMREQLE). The tract at residues 79–254 (VLMDETMKEV…HLEEMREQLE (176 aa)) is 8 X 22 AA approximate tandem repeats. M142 carries the methionine sulfoxide modification. The segment at 157–167 (HLRKLRKRLLR) is LDL and other lipoprotein receptors binding. Heparin is bound at residue 161–164 (LRKR). The tract at residues 209-289 (AATVGTLASQ…SWFEPLVEDM (81 aa)) is lipid-binding and lipoprotein association. Heparin is bound at residue 228 to 235 (HQKLRGRV). A homooligomerization region spans residues 265–316 (SQMRLQAEAFQARLKSWFEPLVEDMQRQWAGLVEKVQLAMATSSTSAPSENH). A specificity for association with VLDL region spans residues 277–289 (RLKSWFEPLVEDM).

Belongs to the apolipoprotein A1/A4/E family. As to quaternary structure, homotetramer. May interact with ABCA1; functionally associated with ABCA1 in the biogenesis of HDLs. May interact with APP/A4 amyloid-beta peptide; the interaction is extremely stable in vitro but its physiological significance is unclear. May interact with MAPT. May interact with MAP2. In the cerebrospinal fluid, interacts with secreted SORL1. Interacts with PMEL; this allows the loading of PMEL luminal fragment on ILVs to induce fibril nucleation. In terms of processing, APOE exists as multiple glycosylated and sialylated glycoforms within cells and in plasma. The extent of glycosylation and sialylation are tissue and context specific. Glycated in plasma VLDL. Post-translationally, phosphorylated by FAM20C in the extracellular medium.

Its subcellular location is the secreted. It localises to the extracellular space. The protein resides in the extracellular matrix. The protein localises to the extracellular vesicle. It is found in the endosome. Its subcellular location is the multivesicular body. Its function is as follows. APOE is an apolipoprotein, a protein associating with lipid particles, that mainly functions in lipoprotein-mediated lipid transport between organs via the plasma and interstitial fluids. APOE is a core component of plasma lipoproteins and is involved in their production, conversion and clearance. Apolipoproteins are amphipathic molecules that interact both with lipids of the lipoprotein particle core and the aqueous environment of the plasma. As such, APOE associates with chylomicrons, chylomicron remnants, very low density lipoproteins (VLDL) and intermediate density lipoproteins (IDL) but shows a preferential binding to high-density lipoproteins (HDL). It also binds a wide range of cellular receptors including the LDL receptor/LDLR and the very low-density lipoprotein receptor/VLDLR that mediate the cellular uptake of the APOE-containing lipoprotein particles. Finally, APOE also has a heparin-binding activity and binds heparan-sulfate proteoglycans on the surface of cells, a property that supports the capture and the receptor-mediated uptake of APOE-containing lipoproteins by cells. The chain is Apolipoprotein E (APOE) from Lipotes vexillifer (Yangtze river dolphin).